The following is a 346-amino-acid chain: Probable galacturonosyltransferase-like 6 (346 aa).

Residues 1 to 21 (MLWITRFAGLFSAAMAVIVLS) traverse the membrane as a helical; Signal-anchor for type II membrane protein segment. Over 22 to 346 (PSLQSFPPAA…TPYDLYRHSH (325 aa)) the chain is Lumenal. N203 is a glycosylation site (N-linked (GlcNAc...) asparagine).

This sequence belongs to the glycosyltransferase 8 family.

Its subcellular location is the golgi apparatus membrane. It participates in glycan metabolism; pectin biosynthesis. Its function is as follows. May be involved in pectin and/or xylans biosynthesis in cell walls. The sequence is that of Probable galacturonosyltransferase-like 6 (GATL6) from Arabidopsis thaliana (Mouse-ear cress).